Consider the following 982-residue polypeptide: Protein cramped (982 aa).

5 disordered regions span residues 1–37, 71–111, 323–349, 407–456, and 822–851; these read MEEL…GGGA, QKMK…GSGK, SLPS…ASLD, NKRL…SSGD, and GTSS…QEPG. Over residues 7 to 20 the composition is skewed to pro residues; sequence QPPPPPLTQPPPPS. The segment covering 21 to 30 has biased composition (low complexity); it reads SSVSIEEPLP. Over residues 86–98 the composition is skewed to basic and acidic residues; sequence SEREPNKKEEKAA. Polar residues predominate over residues 100 to 111; it reads KTPSQLKTGSGK. The region spanning 109–173 is the SANT domain; the sequence is SGKTTWTNVE…HYYQTHHKIC (65 aa). Positions 410-425 are enriched in basic and acidic residues; the sequence is LRTESGSEKRSPETKK. 2 positions are modified to phosphoserine: S431 and S437. The span at 822–833 shows a compositional bias: low complexity; it reads GTSSAGISTSGS.

It belongs to the cramped family. Ubiquitously expressed throughout embryonic development. High expression is detected in CNS and gonads.

The protein localises to the nucleus. Functionally, polycomb group (Pc-G) genes are needed to maintain expression patterns of the homeotic selector genes of the Antennapedia (Antp-C) and Bithorax (Bx-C) complexes, and hence for the maintenance of segmental determination. Can act as a modifier of position effect variegation (PEV). This Drosophila melanogaster (Fruit fly) protein is Protein cramped (crm).